The chain runs to 172 residues: NADH-ubiquinone oxidoreductase chain 6 (172 aa).

4 helical membrane-spanning segments follow: residues 1 to 21 (MNNY…GLAL), 38 to 58 (VGCL…VFLI), 86 to 106 (WLIL…ICVL), and 147 to 167 (CATW…FIII).

This sequence belongs to the complex I subunit 6 family. As to quaternary structure, core subunit of respiratory chain NADH dehydrogenase (Complex I) which is composed of 45 different subunits.

Its subcellular location is the mitochondrion inner membrane. It carries out the reaction a ubiquinone + NADH + 5 H(+)(in) = a ubiquinol + NAD(+) + 4 H(+)(out). Core subunit of the mitochondrial membrane respiratory chain NADH dehydrogenase (Complex I) which catalyzes electron transfer from NADH through the respiratory chain, using ubiquinone as an electron acceptor. Essential for the catalytic activity and assembly of complex I. The chain is NADH-ubiquinone oxidoreductase chain 6 (Mtnd6) from Mus musculus (Mouse).